The sequence spans 60 residues: Cytotoxin 2 (60 aa).

4 disulfide bridges follow: C3-C21, C14-C38, C42-C53, and C54-C59.

Belongs to the three-finger toxin family. Short-chain subfamily. Type IA cytotoxin sub-subfamily. As to quaternary structure, monomer, or heterodimer with alpha-cobratoxin (AC P01391); disulfide-linked. Expressed by the venom gland.

It localises to the secreted. Its subcellular location is the target cell membrane. Functionally, monomer: shows cytolytic activity. In terms of biological role, heterodimer: has no cytolytic activity, but retains most of the alpha-cobratoxin capacity to compete with alpha-bungarotoxin for binding to Torpedo and alpha-7/CHRNA7 nicotinic acetylcholine receptors (nAChRs) as well as to Lymnea stagnalis acetylcholine-binding protein. The sequence is that of Cytotoxin 2 from Naja kaouthia (Monocled cobra).